The primary structure comprises 512 residues: Cytochrome P450 72A11 (512 aa).

The chain crosses the membrane as a helical span at residues 2-22 (EISVASVTVSVAVVVVSWWVW). C460 serves as a coordination point for heme.

It belongs to the cytochrome P450 family. It depends on heme as a cofactor.

It is found in the membrane. This Arabidopsis thaliana (Mouse-ear cress) protein is Cytochrome P450 72A11 (CYP72A11).